The primary structure comprises 122 residues: Spermidine export protein MdtJ (122 aa).

4 helical membrane-spanning segments follow: residues 1 to 21 (MIYW…TLSM), 31 to 51 (TGHI…SMAV), 54 to 74 (VALG…ITLF), and 81 to 101 (EPIS…IMLV).

This sequence belongs to the drug/metabolite transporter (DMT) superfamily. Small multidrug resistance (SMR) (TC 2.A.7.1) family. MdtJ subfamily. Forms a complex with MdtI.

The protein resides in the cell inner membrane. Its function is as follows. Catalyzes the excretion of spermidine. This chain is Spermidine export protein MdtJ, found in Serratia proteamaculans (strain 568).